The chain runs to 429 residues: MALDQRWDRFLVSWFGLDEAQLTAHRVFEGENGVPVEEYVAFVIFGERGFQGNMPSWARHLLDRPSLAQAIAVLRAGSDTVAKQAQICAAQQLLGAHVWVVVTLSRAQAADHARAIPRHVWAKYLSLPFSKACAQLCKLLALCSRFPLVTCCSKPPPSLPWLRKKWHGPLPRRPLLEVPSPTRRGVAATEDGNGLGIGAADTGLREALERVAPTVPCGNPFDAMLGSLCFLSLIKSRHVVLPACEQEGPGLVRNLGRRLLAYNVLSPCVSIPVICSRVARAALAKRARCARAVVCMECGHCLNFGRGKFHTVNFPPTNVFFSRDRKEKQFTICATTGRIYCSYCGSEHMRVYPLCDITGRGTLARVVIRAVLANNAALAIRDLDQTVSFVVPCLGTPDCEAALLKHRDVRGLLQLTSQLLEFCCGKCSS.

Belongs to the herpesviridae UL49 family. As to quaternary structure, interacts with ORF34.

Its subcellular location is the host nucleus. It is found in the host cytoplasm. Its function is as follows. Participates in the expression of late viral mRNAs. The sequence is that of Protein ORF66 (ORF66) from Homo sapiens (Human).